The following is a 117-amino-acid chain: Probable non-functional immunoglobulin kappa variable 1D-42 (117 aa).

A signal peptide spans 1-22; the sequence is MDMRVPAQLLGLLLLWLPGVRF. Residues 23 to 45 form a framework-1 region; the sequence is DIQMTQSPSFLSASVGDRVSIIC. In terms of domain architecture, Ig-like spans 23-117; it reads DIQMTQSPSF…YYCKQDFSYP (95 aa). C45 and C110 are disulfide-bonded. The interval 46 to 56 is complementarity-determining-1; the sequence is WASEGISSNLA. The interval 57-71 is framework-2; that stretch reads WYLQKPGKSPKLFLY. A complementarity-determining-2 region spans residues 72–78; that stretch reads DAKDLHP. A framework-3 region spans residues 79 to 110; that stretch reads GVSSRFSGRGSGTDFTLTIISLKPEDFAAYYC. The tract at residues 111–117 is complementarity-determining-3; the sequence is KQDFSYP.

As to quaternary structure, immunoglobulins are composed of two identical heavy chains and two identical light chains; disulfide-linked.

It localises to the secreted. The protein resides in the cell membrane. In terms of biological role, probable non-functional open reading frame (ORF) of V region of the variable domain of immunoglobulin light chains. Non-functional ORF generally cannot participate in the synthesis of a productive immunoglobulin chain due to altered V-(D)-J or switch recombination and/or splicing site (at mRNA level) and/or conserved amino acid change (protein level). Immunoglobulins, also known as antibodies, are membrane-bound or secreted glycoproteins produced by B lymphocytes. In the recognition phase of humoral immunity, the membrane-bound immunoglobulins serve as receptors which, upon binding of a specific antigen, trigger the clonal expansion and differentiation of B lymphocytes into immunoglobulins-secreting plasma cells. Secreted immunoglobulins mediate the effector phase of humoral immunity, which results in the elimination of bound antigens. The antigen binding site is formed by the variable domain of one heavy chain, together with that of its associated light chain. Thus, each immunoglobulin has two antigen binding sites with remarkable affinity for a particular antigen. The variable domains are assembled by a process called V-(D)-J rearrangement and can then be subjected to somatic hypermutations which, after exposure to antigen and selection, allow affinity maturation for a particular antigen. The chain is Probable non-functional immunoglobulin kappa variable 1D-42 from Homo sapiens (Human).